Here is a 733-residue protein sequence, read N- to C-terminus: Microtubule-associated protein tau (733 aa).

A compositionally biased stretch (basic and acidic residues) spans 1-16 (MADPRQEFDTMEDHAG). Positions 1 to 548 (MADPRQEFDT…PVPMPDLKNV (548 aa)) are disordered. The residue at position 2 (Ala-2) is an N-acetylalanine. Tyr-18 bears the Phosphotyrosine; by FYN mark. Lys-33 is covalently cross-linked (Glycyl lysine isopeptide (Lys-Gly) (interchain with G-Cter in ubiquitin)). Phosphoserine is present on residues Ser-35 and Ser-50. Positions 50–60 (SETSDAKSTPT) are enriched in polar residues. 3 positions are modified to phosphothreonine: Thr-58, Thr-60, and Thr-100. Arg-115 carries the omega-N-methylarginine modification. Residues 126–137 (SDWTRQQVSSMS) show a composition bias toward polar residues. Residues 157–172 (RPEDIEKSHPASELLR) are compositionally biased toward basic and acidic residues. Ser-188 is subject to Phosphoserine. A compositionally biased stretch (acidic residues) spans 189-202 (EEEVDEDLTVDESS). The span at 203-212 (QDSPPSQASL) shows a compositional bias: polar residues. 2 stretches are compositionally biased toward basic and acidic residues: residues 270 to 294 (EEGHEAAPEFTFHVEIKASTPKEQD) and 354 to 366 (ASKDRTGNDEKKA). Residues 413 to 427 (KHVSSVTPRNGSPGT) show a composition bias toward polar residues. Thr-445 bears the Phosphothreonine mark. Position 447 is an omega-N-methylarginine (Arg-447). Ser-451 bears the Phosphoserine mark. Lys-455 is subject to N6,N6-dimethyllysine; alternate. Lys-455 carries the N6-acetyllysine; alternate modification. Thr-461, Thr-467, and Thr-468 each carry phosphothreonine. Residue Ser-470 is modified to Phosphoserine. Residue Thr-473 is modified to Phosphothreonine. Residues Ser-477, Ser-483, and Ser-487 each carry the phosphoserine modification. Residues 479–506 (EPPKSGERSGYSSPGSPGTPGSRSRTPS) are compositionally biased toward low complexity. At Tyr-489 the chain carries Phosphotyrosine. A phosphoserine mark is found at Ser-490, Ser-491, and Ser-494. Thr-497 and Thr-504 each carry phosphothreonine. A Phosphoserine modification is found at Ser-506. Position 509 is a phosphothreonine (Thr-509). At Lys-517 the chain carries N6-acetyllysine. Thr-523 bears the Phosphothreonine mark. Ser-527, Ser-529, and Ser-531 each carry phosphoserine. Tau/MAP repeat units follow at residues 536–566 (QTAPVPMPDLKNVRSKIGSTENLKHQPGGGK), 567–597 (VQIINKKLDLSNVQSKCGSKDNIKHVPGGGS), 598–628 (VQIVYKPVDLSKVTSKCGSLGNIHHKPGGGQ), and 629–660 (VEVKSEKLDFKDRVQSKIGSLDNITHVPGGGN). Lys-546 participates in a covalent cross-link: Glycyl lysine isopeptide (Lys-Gly) (interchain with G-Cter in ubiquitin). N6-acetyllysine; alternate is present on Lys-551. Lys-551 carries the post-translational modification N6-methyllysine; alternate. Residue Lys-551 forms a Glycyl lysine isopeptide (Lys-Gly) (interchain with G-Cter in ubiquitin); alternate linkage. Ser-554 bears the Phosphoserine; by MARK1, BRSK1, BRSK2 and PHK mark. Residue Lys-559 forms a Glycyl lysine isopeptide (Lys-Gly) (interchain with G-Cter in ubiquitin) linkage. An N6-acetyllysine; alternate modification is found at Lys-573. Residue Lys-573 forms a Glycyl lysine isopeptide (Lys-Gly) (interchain with G-Cter in ubiquitin); alternate linkage. Ser-577 and Ser-581 each carry phosphoserine. Residue Lys-582 is modified to N6-acetyllysine. A disulfide bridge connects residues Cys-583 and Cys-614. The residue at position 585 (Ser-585) is a Phosphoserine. The residue at position 590 (Lys-590) is an N6-acetyllysine; alternate. A Glycyl lysine isopeptide (Lys-Gly) (interchain with G-Cter in ubiquitin); alternate cross-link involves residue Lys-590. At Ser-597 the chain carries Phosphoserine. Residue Lys-603 is modified to N6,N6-dimethyllysine; alternate. Lys-603, Lys-609, and Lys-613 each carry N6-acetyllysine; alternate. Residues Lys-603, Lys-609, and Lys-613 each participate in a glycyl lysine isopeptide (Lys-Gly) (interchain with G-Cter in ubiquitin); alternate cross-link. Ser-616 is modified (phosphoserine). An N6-acetyllysine; alternate mark is found at Lys-623, Lys-635, and Lys-639. Glycyl lysine isopeptide (Lys-Gly) (interchain with G-Cter in ubiquitin); alternate cross-links involve residues Lys-623, Lys-635, and Lys-639. Arg-641 is modified (omega-N-methylarginine). Ser-644 bears the Phosphoserine mark. A Glycyl lysine isopeptide (Lys-Gly) (interchain with G-Cter in ubiquitin) cross-link involves residue Lys-645. At Ser-648 the chain carries Phosphoserine. Lys-661 carries the post-translational modification N6-acetyllysine; alternate. Residue Lys-661 forms a Glycyl lysine isopeptide (Lys-Gly) (interchain with G-Cter in ubiquitin); alternate linkage. Lys-667 is covalently cross-linked (Glycyl lysine isopeptide (Lys-Gly) (interchain with G-Cter in ubiquitin)). At Lys-677 the chain carries N6-acetyllysine; alternate. Lys-677 participates in a covalent cross-link: Glycyl lysine isopeptide (Lys-Gly) (interchain with G-Cter in ubiquitin); alternate. Tyr-686 carries the post-translational modification Phosphotyrosine. Ser-688 bears the Phosphoserine mark. The interval 690-709 (VVSGDTSPRHLSNVSSTGSI) is disordered. Position 692 is a phosphoserine; alternate (Ser-692). Residue Ser-692 is glycosylated (O-linked (GlcNAc...) serine; alternate). Residues 693–708 (GDTSPRHLSNVSSTGS) show a composition bias toward polar residues. Position 695 is a phosphothreonine (Thr-695). 4 positions are modified to phosphoserine: Ser-696, Ser-701, Ser-708, and Ser-714. The residue at position 719 (Thr-719) is a Phosphothreonine.

In terms of assembly, interacts with MARK1, MARK2, MARK3 and MARK4. Interacts with SQSTM1 when polyubiquitinated. Interacts with PSMC2 through SQSTM1. Interacts with FKBP4. Binds to CSNK1D. Interacts with SGK1. Interacts with EPM2A; the interaction dephosphorylates MAPT at Ser-369. Interacts with PIN1. Interacts with LRRK2. Interacts with LRP1, leading to endocytosis; this interaction is reduced in the presence of LRPAP1/RAP. In terms of processing, polyubiquitinated. Requires functional TRAF6 and may provoke SQSTM1-dependent degradation by the proteasome. Post-translationally, phosphorylation at various serine and threonine residues in S-P or T-P motifs by proline-directed protein kinases (PDPK1, CDK1, CDK5, GSK3, MAPK) (a few sites per protein in interphase, more in mitosis), and at serine residues in K-X-G-S motifs by MAP/microtubule affinity-regulating kinase (MARK1, MARK2, MARK3, MARK4), causing detachment from microtubules, and their disassembly. Phosphorylated by PHK. Dephosphorylation at several serine and threonine residues by the serine/threonine phosphatase PPP5C. Phosphorylation at Ser-554 by BRSK1 and BRSK2 in neurons affects ability to bind microtubules and plays a role in neuron polarization. Phosphorylation at Ser-188 by SGK1 mediates microtubule depolymerization and neurite formation in hippocampal neurons. In terms of tissue distribution, expressed in neurons and at a lower level in the liver and kidney. Isoform PNS-tau is expressed in the peripheral nervous system while the others are expressed in the central nervous system.

The protein localises to the cytoplasm. It localises to the cytosol. It is found in the cell membrane. The protein resides in the cytoskeleton. Its subcellular location is the cell projection. The protein localises to the axon. It localises to the dendrite. It is found in the secreted. Promotes microtubule assembly and stability, and might be involved in the establishment and maintenance of neuronal polarity. The C-terminus binds axonal microtubules while the N-terminus binds neural plasma membrane components, suggesting that tau functions as a linker protein between both. Axonal polarity is predetermined by tau localization (in the neuronal cell) in the domain of the cell body defined by the centrosome. The short isoforms allow plasticity of the cytoskeleton whereas the longer isoforms may preferentially play a role in its stabilization. The polypeptide is Microtubule-associated protein tau (Mus musculus (Mouse)).